The sequence spans 252 residues: 2-succinyl-6-hydroxy-2,4-cyclohexadiene-1-carboxylate synthase (252 aa).

The protein belongs to the AB hydrolase superfamily. MenH family. Monomer.

It carries out the reaction 5-enolpyruvoyl-6-hydroxy-2-succinyl-cyclohex-3-ene-1-carboxylate = (1R,6R)-6-hydroxy-2-succinyl-cyclohexa-2,4-diene-1-carboxylate + pyruvate. Its pathway is quinol/quinone metabolism; 1,4-dihydroxy-2-naphthoate biosynthesis; 1,4-dihydroxy-2-naphthoate from chorismate: step 3/7. It functions in the pathway quinol/quinone metabolism; menaquinone biosynthesis. Catalyzes a proton abstraction reaction that results in 2,5-elimination of pyruvate from 2-succinyl-5-enolpyruvyl-6-hydroxy-3-cyclohexene-1-carboxylate (SEPHCHC) and the formation of 2-succinyl-6-hydroxy-2,4-cyclohexadiene-1-carboxylate (SHCHC). This is 2-succinyl-6-hydroxy-2,4-cyclohexadiene-1-carboxylate synthase from Salmonella choleraesuis (strain SC-B67).